The sequence spans 65 residues: Large ribosomal subunit protein bL35 (65 aa).

This sequence belongs to the bacterial ribosomal protein bL35 family.

This chain is Large ribosomal subunit protein bL35, found in Karelsulcia muelleri (strain GWSS) (Sulcia muelleri).